Reading from the N-terminus, the 87-residue chain is MSERNDRKVYVGKVVSDKMDKTITVLVETYKTHKLYGKRVKYSKKYKTHDENNSAKLGDIVKIQETRPLSATKRFRLVEIVEESVII.

It belongs to the universal ribosomal protein uS17 family. Part of the 30S ribosomal subunit.

Its function is as follows. One of the primary rRNA binding proteins, it binds specifically to the 5'-end of 16S ribosomal RNA. The chain is Small ribosomal subunit protein uS17 from Staphylococcus aureus (strain JH1).